Here is a 240-residue protein sequence, read N- to C-terminus: Sugar fermentation stimulation protein homolog (240 aa).

This sequence belongs to the SfsA family.

The protein is Sugar fermentation stimulation protein homolog of Crocosphaera subtropica (strain ATCC 51142 / BH68) (Cyanothece sp. (strain ATCC 51142)).